We begin with the raw amino-acid sequence, 317 residues long: Methionyl-tRNA formyltransferase (317 aa).

110–113 (SLLP) provides a ligand contact to (6S)-5,6,7,8-tetrahydrofolate.

Belongs to the Fmt family.

The enzyme catalyses L-methionyl-tRNA(fMet) + (6R)-10-formyltetrahydrofolate = N-formyl-L-methionyl-tRNA(fMet) + (6S)-5,6,7,8-tetrahydrofolate + H(+). Functionally, attaches a formyl group to the free amino group of methionyl-tRNA(fMet). The formyl group appears to play a dual role in the initiator identity of N-formylmethionyl-tRNA by promoting its recognition by IF2 and preventing the misappropriation of this tRNA by the elongation apparatus. The protein is Methionyl-tRNA formyltransferase of Bacillus subtilis (strain 168).